A 146-amino-acid polypeptide reads, in one-letter code: Ribosome maturation factor RimP (146 aa).

Belongs to the RimP family.

It localises to the cytoplasm. In terms of biological role, required for maturation of 30S ribosomal subunits. The chain is Ribosome maturation factor RimP from Helicobacter pylori (strain P12).